The primary structure comprises 351 residues: Peptide chain release factor 1 (351 aa).

N5-methylglutamine is present on Gln229.

The protein belongs to the prokaryotic/mitochondrial release factor family. In terms of processing, methylated by PrmC. Methylation increases the termination efficiency of RF1.

The protein resides in the cytoplasm. Its function is as follows. Peptide chain release factor 1 directs the termination of translation in response to the peptide chain termination codons UAG and UAA. In Cereibacter sphaeroides (strain KD131 / KCTC 12085) (Rhodobacter sphaeroides), this protein is Peptide chain release factor 1.